The chain runs to 235 residues: Phosphoribosylaminoimidazole-succinocarboxamide synthase (235 aa).

Belongs to the SAICAR synthetase family.

It catalyses the reaction 5-amino-1-(5-phospho-D-ribosyl)imidazole-4-carboxylate + L-aspartate + ATP = (2S)-2-[5-amino-1-(5-phospho-beta-D-ribosyl)imidazole-4-carboxamido]succinate + ADP + phosphate + 2 H(+). The protein operates within purine metabolism; IMP biosynthesis via de novo pathway; 5-amino-1-(5-phospho-D-ribosyl)imidazole-4-carboxamide from 5-amino-1-(5-phospho-D-ribosyl)imidazole-4-carboxylate: step 1/2. This is Phosphoribosylaminoimidazole-succinocarboxamide synthase from Streptococcus thermophilus (strain ATCC BAA-491 / LMD-9).